The primary structure comprises 4684 residues: Plectin (4684 aa).

Residues M1–Y1470 form a globular 1 region. A phosphoserine mark is found at F20 and R21. A Phosphotyrosine modification is found at V26. G42 is modified (phosphoserine). At T113 the chain carries Phosphothreonine. Phosphoserine is present on residues S125 and S149. The tract at residues E144–R179 is disordered. The tract at residues D175–P400 is actin-binding. 2 Calponin-homology (CH) domains span residues R179–Q282 and M295–P400. The stretch at L645–E710 is one Spectrin 1 repeat. S720 is subject to Phosphoserine. 2 Spectrin repeats span residues K740–H824 and L837–Q930. One can recognise an SH3 domain in the interval R941–P998. A required for interaction with intermediate filament proteins region spans residues E964–C4574. Residue S1047 is modified to Phosphoserine. The stretch at R1315–A1415 is one Spectrin 4 repeat. S1435 bears the Phosphoserine mark. Residues Q1469 to Q2756 adopt a coiled-coil conformation. Residues I1471–S2755 are central fibrous rod domain. Residues R1618–A1650 form a disordered region. Position 1721 is a phosphoserine (S1721). K1725 bears the N6-acetyllysine mark. Residue S1732 is modified to Phosphoserine. Disordered regions lie at residues L1794 to Q1836, E2105 to R2139, and R2217 to H2307. 3 stretches are compositionally biased toward basic and acidic residues: residues E1798–Q1836, E2105–Q2128, and R2217–A2258. Residues E2259–A2272 show a composition bias toward low complexity. Residues E2273 to Q2288 are compositionally biased toward basic and acidic residues. S2631 is subject to Phosphoserine. Position 2636 is an N6-acetyllysine (K2636). Disordered stretches follow at residues R2668–Q2707 and L2763–D2784. Residues E2679 to Q2707 are compositionally biased toward basic and acidic residues. The interval Q2756–A4684 is globular 2. Phosphoserine occurs at positions 2782 and 2802. Plectin repeat units lie at residues R2826 to A2863, L2864 to H2901, H2902 to G2939, I2940 to N2977, and A2981 to G3015. Phosphothreonine is present on T2886. Y3033 is modified (phosphotyrosine). S3036 carries the post-translational modification Phosphoserine. K3053 and K3091 each carry N6-acetyllysine. Plectin repeat units lie at residues S3116–V3153, R3154–A3191, V3192–H3229, E3230–G3267, L3268–S3305, and R3306–G3343. The segment at A3310–E3331 is disordered. Position 3362 is a phosphotyrosine (Y3362). K3420 carries the post-translational modification N6-acetyllysine. 5 Plectin repeats span residues R3485–A3522, A3523–H3560, E3561–G3598, I3599–N3636, and A3640–G3674. Position 3580 is a phosphoserine (S3580). T3785 carries the phosphothreonine modification. Plectin repeat units lie at residues W3820–A3857, R3858–H3895, D3896–A3933, L3934–H3971, and S3975–G4008. Positions P3956–E4293 are required for interaction with type2 keratins, DES and VIM. Phosphothreonine is present on T4030. Phosphoserine is present on S4054. 7 Plectin repeats span residues Q4063–A4100, F4101–K4138, D4139–G4176, I4177–N4214, T4218–G4252, R4265–Y4305, and T4319–L4356. Positions Q4250 to I4300 are binding to intermediate filaments. Phosphoserine is present on residues S4382, S4384, S4385, S4386, S4389, S4390, S4391, and S4392. Y4393 is modified (phosphotyrosine). A phosphoserine mark is found at S4396, S4400, and S4406. 5 Plectin repeats span residues S4408 to G4445, Q4446 to V4483, D4484 to G4521, Q4522 to A4559, and Q4560 to G4597. Residue T4411 is modified to Phosphothreonine. The segment at M4505–C4574 is required for efficient interaction with KRT5 and KRT14 heterodimers. The residue at position 4539 (T4539) is a Phosphothreonine; by CDK1. Residues S4607 and S4613 each carry the phosphoserine modification. Over residues Y4611–G4678 the composition is skewed to low complexity. Residues Y4611–A4684 form a disordered region. Y4615 bears the Phosphotyrosine mark. Phosphoserine is present on residues S4616, S4618, and S4622. T4623 is subject to Phosphothreonine. Positions G4625–R4640 are 4 X 4 AA tandem repeats of G-S-R-X. Phosphoserine is present on S4626. An omega-N-methylarginine mark is found at R4627 and R4640. 3 positions are modified to phosphoserine: S4642, S4672, and S4675.

This sequence belongs to the plakin or cytolinker family. As to quaternary structure, homodimer or homotetramer. Interacts (via actin-binding domain) with SYNE3. Interacts (via calponin-homology (CH) 1 domain) with VIM (via rod region). Interacts (via N-terminus) with DST isoform 2 (via N-terminus). Interacts with FER. Interacts with TOR1A. Interacts with ANK3. Identified in complexes that contain VIM, EZR, AHNAK, BFSP1, BFSP2, ANK2, PLEC, PRX and spectrin. Interacts with COL17A1. In terms of assembly, interacts with KRT14, heterodimers consisting of KRT8 and KRT18, heterodimers consisting of KRT5 and KRT14, heterodimers consisting of KRT14 and KRT15, and heterodimers consisting of KRT1 and KRT10. Interacts with DES and VIM. Post-translationally, phosphorylated by CDK1; regulates dissociation from intermediate filaments during mitosis. Widely expressed with highest levels in muscle, heart, placenta and spinal cord.

The protein resides in the cytoplasm. It is found in the cytoskeleton. It localises to the cell junction. The protein localises to the hemidesmosome. Its subcellular location is the cell projection. The protein resides in the podosome. Interlinks intermediate filaments with microtubules and microfilaments and anchors intermediate filaments to desmosomes or hemidesmosomes. Could also bind muscle proteins such as actin to membrane complexes in muscle. May be involved not only in the filaments network, but also in the regulation of their dynamics. Structural component of muscle. Isoform 9 plays a major role in the maintenance of myofiber integrity. The chain is Plectin (PLEC) from Homo sapiens (Human).